Here is a 222-residue protein sequence, read N- to C-terminus: Pleckstrin homology domain-containing family B member 2 (222 aa).

The 108-residue stretch at 2–109 folds into the PH domain; sequence AFVKSGWLLR…WKFTLQDSRT (108 aa). Lysine 20 lines the a 1,2-diacyl-sn-glycero-3-phospho-L-serine pocket.

Its subcellular location is the recycling endosome membrane. Involved in retrograde transport of recycling endosomes. The chain is Pleckstrin homology domain-containing family B member 2 (PLEKHB2) from Homo sapiens (Human).